The following is a 382-amino-acid chain: 3-ketosteroid-9-alpha-monooxygenase, oxygenase component (382 aa).

One can recognise a Rieske domain in the interval 20 to 122 (WHCLGLSRTF…TMEKHGQLFV (103 aa)). Positions 61, 63, 80, and 83 each coordinate [2Fe-2S] cluster. Positions 169, 175, 180, and 298 each coordinate Fe cation.

As to quaternary structure, homotrimer. The two-component system 3-ketosteroid-9-alpha-monooxygenase is composed of an oxygenase component KshA and a reductase component KshB. [2Fe-2S] cluster serves as cofactor. It depends on Fe cation as a cofactor.

It carries out the reaction androsta-1,4-diene-3,17-dione + 2 reduced [2Fe-2S]-[ferredoxin] + O2 + 2 H(+) = 9alpha-hydroxyandrosta-1,4-diene-3,17-dione + 2 oxidized [2Fe-2S]-[ferredoxin] + H2O. Functionally, in vitro, catalyzes the introduction of a 9alpha-hydroxyl moiety into the ring B of 3-ketosteroid substrates such as 1,4-androstadiene-3,17-dione (ADD), 4-androstene-3,17-dione (AD), 4-androstene-17beta-ol-3-one (testosterone), 4-pregnene-3,20-dione (progesterone), 23,24-bisnorcholesta-4-ene-22-oate and 23,24-bisnorcholesta-1,4-diene-22-oate. The chain is 3-ketosteroid-9-alpha-monooxygenase, oxygenase component from Rhodococcus rhodochrous.